A 359-amino-acid polypeptide reads, in one-letter code: Protein-L-isoaspartate O-methyltransferase domain-containing protein 2 (359 aa).

Residue G2 is the site of N-myristoyl glycine attachment. Residue S64 is part of the active site. AdoMet binding motif stretches follow at residues 85-94, 160-164, and 181-191; these read LNLGSGTGYL, YDRVY, and LKVGGILVMPL. Residues 240–250 form a BC-box region; that stretch reads VRSLQDLARLA. The interval 301–328 is disordered; the sequence is SNPSDDTSCEDAEEDRREVAERTLQETK. A compositionally biased stretch (basic and acidic residues) spans 314–328; sequence EDRREVAERTLQETK. The interval 343–346 is CUL-box; it reads LPLP.

The protein belongs to the methyltransferase superfamily. L-isoaspartyl/D-aspartyl protein methyltransferase family.

It is found in the cytoplasm. May act as a substrate recognition component of an ECS (Elongin BC-CUL5-SOCS-box protein) E3 ubiquitin ligase complex which mediates the ubiquitination and subsequent proteasomal degradation of target proteins. May bind to the methyltransferase cofactor S-adenosylmethionine (AdoMet) via the N-terminal AdoMet binding motif, but probably does not display methyltransferase activity. The chain is Protein-L-isoaspartate O-methyltransferase domain-containing protein 2 (Pcmtd2) from Mus musculus (Mouse).